Consider the following 207-residue polypeptide: Large ribosomal subunit protein bL25 (207 aa).

Belongs to the bacterial ribosomal protein bL25 family. CTC subfamily. In terms of assembly, part of the 50S ribosomal subunit; part of the 5S rRNA/L5/L18/L25 subcomplex. Contacts the 5S rRNA. Binds to the 5S rRNA independently of L5 and L18.

Functionally, this is one of the proteins that binds to the 5S RNA in the ribosome where it forms part of the central protuberance. In Brucella abortus (strain S19), this protein is Large ribosomal subunit protein bL25.